Consider the following 217-residue polypeptide: Non-structural protein NS3 (217 aa).

This sequence belongs to the orbivirus NS3 family.

May play a role in the release of virions from infected cells. The polypeptide is Non-structural protein NS3 (Segment-10) (African horse sickness virus 6 (AHSV-6)).